Consider the following 1409-residue polypeptide: DNA-directed RNA polymerase subunit beta' (1409 aa).

Zn(2+) contacts are provided by Cys-70, Cys-72, Cys-85, and Cys-88. Mg(2+) contacts are provided by Asp-458, Asp-460, and Asp-462. Zn(2+)-binding residues include Cys-813, Cys-887, Cys-894, and Cys-897.

The protein belongs to the RNA polymerase beta' chain family. The RNAP catalytic core consists of 2 alpha, 1 beta, 1 beta' and 1 omega subunit. When a sigma factor is associated with the core the holoenzyme is formed, which can initiate transcription. Mg(2+) serves as cofactor. The cofactor is Zn(2+).

It carries out the reaction RNA(n) + a ribonucleoside 5'-triphosphate = RNA(n+1) + diphosphate. DNA-dependent RNA polymerase catalyzes the transcription of DNA into RNA using the four ribonucleoside triphosphates as substrates. This is DNA-directed RNA polymerase subunit beta' from Delftia acidovorans (strain DSM 14801 / SPH-1).